The primary structure comprises 167 residues: Lipoprotein signal peptidase (167 aa).

A run of 4 helical transmembrane segments spans residues 8 to 28 (TFLT…VVLL), 46 to 66 (WGHF…FGLF), 70 to 90 (KIPL…FLGI), and 101 to 121 (IALT…LFHG). Active-site residues include D125 and D143. The helical transmembrane segment at 139 to 159 (FNLADAFISLGTLLLVGHLYF) threads the bilayer.

The protein belongs to the peptidase A8 family.

Its subcellular location is the cell inner membrane. It catalyses the reaction Release of signal peptides from bacterial membrane prolipoproteins. Hydrolyzes -Xaa-Yaa-Zaa-|-(S,diacylglyceryl)Cys-, in which Xaa is hydrophobic (preferably Leu), and Yaa (Ala or Ser) and Zaa (Gly or Ala) have small, neutral side chains.. The protein operates within protein modification; lipoprotein biosynthesis (signal peptide cleavage). This protein specifically catalyzes the removal of signal peptides from prolipoproteins. The polypeptide is Lipoprotein signal peptidase (Chlamydia muridarum (strain MoPn / Nigg)).